A 288-amino-acid chain; its full sequence is Glycine--tRNA ligase alpha subunit (288 aa).

It belongs to the class-II aminoacyl-tRNA synthetase family. As to quaternary structure, tetramer of two alpha and two beta subunits.

It localises to the cytoplasm. It catalyses the reaction tRNA(Gly) + glycine + ATP = glycyl-tRNA(Gly) + AMP + diphosphate. This Rickettsia massiliae (strain Mtu5) protein is Glycine--tRNA ligase alpha subunit.